Consider the following 158-residue polypeptide: NAD(P)H-quinone oxidoreductase subunit N (158 aa).

The protein belongs to the complex I NdhN subunit family. As to quaternary structure, NDH-1 can be composed of about 15 different subunits; different subcomplexes with different compositions have been identified which probably have different functions.

The protein localises to the cellular thylakoid membrane. The catalysed reaction is a plastoquinone + NADH + (n+1) H(+)(in) = a plastoquinol + NAD(+) + n H(+)(out). It carries out the reaction a plastoquinone + NADPH + (n+1) H(+)(in) = a plastoquinol + NADP(+) + n H(+)(out). Functionally, NDH-1 shuttles electrons from an unknown electron donor, via FMN and iron-sulfur (Fe-S) centers, to quinones in the respiratory and/or the photosynthetic chain. The immediate electron acceptor for the enzyme in this species is believed to be plastoquinone. Couples the redox reaction to proton translocation, and thus conserves the redox energy in a proton gradient. Cyanobacterial NDH-1 also plays a role in inorganic carbon-concentration. This chain is NAD(P)H-quinone oxidoreductase subunit N, found in Trichodesmium erythraeum (strain IMS101).